The sequence spans 335 residues: Oligopeptide transport ATP-binding protein OppD (335 aa).

In terms of domain architecture, ABC transporter spans 18–267; that stretch reads LEVNDLRVTF…PVHPYSIGLL (250 aa). Position 54-61 (54-61) interacts with ATP; sequence GESGSGKS.

The protein belongs to the ABC transporter superfamily. As to quaternary structure, the complex is composed of two ATP-binding proteins (OppD and OppF), two transmembrane proteins (OppB and OppC) and a solute-binding protein (OppA).

Its subcellular location is the cell inner membrane. It carries out the reaction a [peptide](out) + ATP + H2O = a [peptide](in) + ADP + phosphate + H(+). It catalyses the reaction L-alanyl-gamma-D-glutamyl-meso-2,6-diaminopimelate(out) + ATP + H2O = L-alanyl-gamma-D-glutamyl-meso-2,6-diaminopimelate(in) + ADP + phosphate + H(+). Functionally, part of the ABC transporter complex OppABCDF involved in the uptake of oligopeptides, including the cell wall murein tripeptide L-alanyl-gamma-D-glutamyl-meso-diaminopimelate. Responsible for energy coupling to the transport system. Plays an important nutritional role and is involved in the recycling of cell wall peptides. Binds ATP. The polypeptide is Oligopeptide transport ATP-binding protein OppD (Salmonella typhimurium (strain LT2 / SGSC1412 / ATCC 700720)).